The following is a 303-amino-acid chain: Putative S-adenosyl-L-methionine-dependent methyltransferase Mb1931c (303 aa).

Residues D129 and 158–159 (DL) each bind S-adenosyl-L-methionine.

It belongs to the UPF0677 family.

Its function is as follows. Exhibits S-adenosyl-L-methionine-dependent methyltransferase activity. This chain is Putative S-adenosyl-L-methionine-dependent methyltransferase Mb1931c, found in Mycobacterium bovis (strain ATCC BAA-935 / AF2122/97).